The sequence spans 468 residues: Siroheme synthase (468 aa).

The precorrin-2 dehydrogenase /sirohydrochlorin ferrochelatase stretch occupies residues 1–202; that stretch reads MDYLPLFARL…EQHDSAEQWM (202 aa). NAD(+) is bound by residues 22–23 and 43–44; these read DI and PS. Residue S126 is modified to Phosphoserine. The tract at residues 214–468 is uroporphyrinogen-III C-methyltransferase; the sequence is GEIVLVGAGP…SGKEHLINLA (255 aa). P223 is a binding site for S-adenosyl-L-methionine. The Proton acceptor role is filled by D246. The active-site Proton donor is K268. S-adenosyl-L-methionine-binding positions include 299–301, 329–330, M381, and G410; these read GGD and TA.

This sequence in the N-terminal section; belongs to the precorrin-2 dehydrogenase / sirohydrochlorin ferrochelatase family. It in the C-terminal section; belongs to the precorrin methyltransferase family.

It carries out the reaction uroporphyrinogen III + 2 S-adenosyl-L-methionine = precorrin-2 + 2 S-adenosyl-L-homocysteine + H(+). The enzyme catalyses precorrin-2 + NAD(+) = sirohydrochlorin + NADH + 2 H(+). The catalysed reaction is siroheme + 2 H(+) = sirohydrochlorin + Fe(2+). The protein operates within cofactor biosynthesis; adenosylcobalamin biosynthesis; precorrin-2 from uroporphyrinogen III: step 1/1. It participates in cofactor biosynthesis; adenosylcobalamin biosynthesis; sirohydrochlorin from precorrin-2: step 1/1. It functions in the pathway porphyrin-containing compound metabolism; siroheme biosynthesis; precorrin-2 from uroporphyrinogen III: step 1/1. Its pathway is porphyrin-containing compound metabolism; siroheme biosynthesis; siroheme from sirohydrochlorin: step 1/1. The protein operates within porphyrin-containing compound metabolism; siroheme biosynthesis; sirohydrochlorin from precorrin-2: step 1/1. Multifunctional enzyme that catalyzes the SAM-dependent methylations of uroporphyrinogen III at position C-2 and C-7 to form precorrin-2 via precorrin-1. Then it catalyzes the NAD-dependent ring dehydrogenation of precorrin-2 to yield sirohydrochlorin. Finally, it catalyzes the ferrochelation of sirohydrochlorin to yield siroheme. The sequence is that of Siroheme synthase from Tolumonas auensis (strain DSM 9187 / NBRC 110442 / TA 4).